A 445-amino-acid chain; its full sequence is 2-oxoisovalerate dehydrogenase subunit alpha, mitochondrial (445 aa).

A mitochondrion-targeting transit peptide spans 1-45 (MAVAIAAARVWRLNRGLSQAALLLLRRPGARGLARSHPRRQQQQF). The disordered stretch occupies residues 33 to 54 (LARSHPRRQQQQFSSLDDKPQF). The thiamine diphosphate site is built by Y158 and R159. Position 206 (S206) interacts with K(+). S207 serves as a coordination point for thiamine diphosphate. K(+) is bound by residues P208, T211, and Q212. Position 238 (E238) interacts with Mg(2+). Residues G239, A240, and R265 each coordinate thiamine diphosphate. Mg(2+) is bound by residues N267 and Y269. H336 contacts thiamine diphosphate. Residue S337 is modified to Phosphoserine; by BCKDK. Position 338 is a phosphothreonine (T338). Residues S339 and S347 each carry the phosphoserine modification. K356 carries the N6-acetyllysine; alternate modification. Residue K356 is modified to N6-succinyllysine; alternate. K380 is modified (N6-succinyllysine).

Belongs to the BCKDHA family. Heterotetramer of 2 alpha/BCKDHA and 2 beta chains/BCKDHB that forms the branched-chain alpha-keto acid decarboxylase (E1) component of the BCKD complex. The branched-chain alpha-ketoacid dehydrogenase is a large complex composed of three major building blocks E1, E2 and E3. It is organized around E2, a 24-meric cubic core composed of DBT, to which are associated 6 to 12 copies of E1, and approximately 6 copies of the dehydrogenase E3, a DLD dimer. Interacts with PPM1K. Requires thiamine diphosphate as cofactor. Mg(2+) serves as cofactor. Post-translationally, phosphorylated at Ser-337 by BCKDK and dephosphorylated by protein phosphatase PPM1K.

It localises to the mitochondrion matrix. The enzyme catalyses N(6)-[(R)-lipoyl]-L-lysyl-[protein] + 3-methyl-2-oxobutanoate + H(+) = N(6)-[(R)-S(8)-2-methylpropanoyldihydrolipoyl]-L-lysyl-[protein] + CO2. In terms of biological role, together with BCKDHB forms the heterotetrameric E1 subunit of the mitochondrial branched-chain alpha-ketoacid dehydrogenase (BCKD) complex. The BCKD complex catalyzes the multi-step oxidative decarboxylation of alpha-ketoacids derived from the branched-chain amino-acids valine, leucine and isoleucine producing CO2 and acyl-CoA which is subsequently utilized to produce energy. The E1 subunit catalyzes the first step with the decarboxylation of the alpha-ketoacid forming an enzyme-product intermediate. A reductive acylation mediated by the lipoylamide cofactor of E2 extracts the acyl group from the E1 active site for the next step of the reaction. In Pan troglodytes (Chimpanzee), this protein is 2-oxoisovalerate dehydrogenase subunit alpha, mitochondrial (BCKDHA).